Here is a 118-residue protein sequence, read N- to C-terminus: Large ribosomal subunit protein bL20 (118 aa).

The protein belongs to the bacterial ribosomal protein bL20 family.

In terms of biological role, binds directly to 23S ribosomal RNA and is necessary for the in vitro assembly process of the 50S ribosomal subunit. It is not involved in the protein synthesizing functions of that subunit. The chain is Large ribosomal subunit protein bL20 from Ectopseudomonas mendocina (strain ymp) (Pseudomonas mendocina).